The primary structure comprises 358 residues: Alanine racemase, biosynthetic (358 aa).

Catalysis depends on lysine 34, which acts as the Proton acceptor; specific for D-alanine. Lysine 34 is subject to N6-(pyridoxal phosphate)lysine. Arginine 130 is a substrate binding site. The Proton acceptor; specific for L-alanine role is filled by tyrosine 254. Residue methionine 302 participates in substrate binding.

Belongs to the alanine racemase family. Pyridoxal 5'-phosphate is required as a cofactor.

It carries out the reaction L-alanine = D-alanine. Its pathway is amino-acid biosynthesis; D-alanine biosynthesis; D-alanine from L-alanine: step 1/1. It functions in the pathway cell wall biogenesis; peptidoglycan biosynthesis. Catalyzes the interconversion of L-alanine and D-alanine. Provides the D-alanine required for cell wall biosynthesis. This is Alanine racemase, biosynthetic (alr) from Pseudomonas aeruginosa (strain ATCC 15692 / DSM 22644 / CIP 104116 / JCM 14847 / LMG 12228 / 1C / PRS 101 / PAO1).